Consider the following 542-residue polypeptide: CTP synthase (542 aa).

Residues 1–265 (MTRYIFVTGG…DDFVVERFGL (265 aa)) form an amidoligase domain region. Ser-13 provides a ligand contact to CTP. UTP is bound at residue Ser-13. ATP contacts are provided by residues 14–19 (SLGKGI) and Asp-71. Positions 71 and 139 each coordinate Mg(2+). CTP is bound by residues 146 to 148 (DIE), 186 to 191 (KTKPTQ), and Lys-222. UTP contacts are provided by residues 186 to 191 (KTKPTQ) and Lys-222. The Glutamine amidotransferase type-1 domain occupies 290–541 (TIAMVGKYME…VKAALAQKNK (252 aa)). Gly-351 contacts L-glutamine. Cys-378 acts as the Nucleophile; for glutamine hydrolysis in catalysis. L-glutamine-binding positions include 379–382 (LGMQ), Glu-402, and Arg-469. Catalysis depends on residues His-514 and Glu-516.

The protein belongs to the CTP synthase family. Homotetramer.

It catalyses the reaction UTP + L-glutamine + ATP + H2O = CTP + L-glutamate + ADP + phosphate + 2 H(+). It carries out the reaction L-glutamine + H2O = L-glutamate + NH4(+). The enzyme catalyses UTP + NH4(+) + ATP = CTP + ADP + phosphate + 2 H(+). Its pathway is pyrimidine metabolism; CTP biosynthesis via de novo pathway; CTP from UDP: step 2/2. With respect to regulation, allosterically activated by GTP, when glutamine is the substrate; GTP has no effect on the reaction when ammonia is the substrate. The allosteric effector GTP functions by stabilizing the protein conformation that binds the tetrahedral intermediate(s) formed during glutamine hydrolysis. Inhibited by the product CTP, via allosteric rather than competitive inhibition. Its function is as follows. Catalyzes the ATP-dependent amination of UTP to CTP with either L-glutamine or ammonia as the source of nitrogen. Regulates intracellular CTP levels through interactions with the four ribonucleotide triphosphates. The polypeptide is CTP synthase (Pseudomonas putida (strain GB-1)).